Reading from the N-terminus, the 111-residue chain is uncharacterized protein (111 aa).

Residues 48–70 (LFLVPFPASFTRWLTFLFHLVIY) form a helical membrane-spanning segment.

Its subcellular location is the membrane. This is an uncharacterized protein from Saccharomyces cerevisiae (strain ATCC 204508 / S288c) (Baker's yeast).